We begin with the raw amino-acid sequence, 341 residues long: DNA-directed RNA polymerase subunit alpha (341 aa).

Positions 1 to 233 (MIRDEIPISA…NLFIPFLHAE (233 aa)) are alpha N-terminal domain (alpha-NTD). The interval 265-341 (TKGVTFKHIF…NLPKNKLHFH (77 aa)) is alpha C-terminal domain (alpha-CTD).

The protein belongs to the RNA polymerase alpha chain family. In plastids the minimal PEP RNA polymerase catalytic core is composed of four subunits: alpha, beta, beta', and beta''. When a (nuclear-encoded) sigma factor is associated with the core the holoenzyme is formed, which can initiate transcription.

The protein resides in the plastid. It is found in the chloroplast. The catalysed reaction is RNA(n) + a ribonucleoside 5'-triphosphate = RNA(n+1) + diphosphate. DNA-dependent RNA polymerase catalyzes the transcription of DNA into RNA using the four ribonucleoside triphosphates as substrates. The polypeptide is DNA-directed RNA polymerase subunit alpha (Takakia lepidozioides (Moss)).